The primary structure comprises 413 residues: Eukaryotic initiation factor 4A-7 (413 aa).

A Q motif motif is present at residues 40 to 68 (DSFDAMGLQENLLRGIYAYGFEKPSAIQQ). The Helicase ATP-binding domain occupies 71 to 241 (IVPFCKGLDV…RKFMNKPVRI (171 aa)). 84–91 (AQSGTGKT) is a binding site for ATP. Positions 189-192 (DEAD) match the DEAD box motif. One can recognise a Helicase C-terminal domain in the interval 252–413 (GIKQFYVNVD…ELPANVADLL (162 aa)).

The protein belongs to the DEAD box helicase family. eIF4A subfamily. As to quaternary structure, eIF4F is a multi-subunit complex, the composition of which varies with external and internal environmental conditions. It is composed of at least EIF4A, EIF4E and EIF4G.

It carries out the reaction ATP + H2O = ADP + phosphate + H(+). Its function is as follows. ATP-dependent RNA helicase which is a subunit of the eIF4F complex involved in cap recognition and is required for mRNA binding to ribosome. In the current model of translation initiation, eIF4A unwinds RNA secondary structures in the 5'-UTR of mRNAs which is necessary to allow efficient binding of the small ribosomal subunit, and subsequent scanning for the initiator codon. The chain is Eukaryotic initiation factor 4A-7 from Nicotiana tabacum (Common tobacco).